Here is an 84-residue protein sequence, read N- to C-terminus: Small ribosomal subunit protein bS16 (84 aa).

It belongs to the bacterial ribosomal protein bS16 family.

This chain is Small ribosomal subunit protein bS16, found in Burkholderia multivorans (strain ATCC 17616 / 249).